Consider the following 146-residue polypeptide: Phospholipase A2, membrane associated (146 aa).

The first 21 residues, 1–21, serve as a signal peptide directing secretion; sequence MKVLLLLAVVIMAFGSIQVQG. 7 cysteine pairs are disulfide-bonded: C47–C139, C49–C65, C64–C119, C70–C146, C71–C112, C80–C105, and C98–C110. Ca(2+) contacts are provided by H48, G50, and G52. H68 is a catalytic residue. D69 provides a ligand contact to Ca(2+). The active site involves D113.

Belongs to the phospholipase A2 family. Ca(2+) is required as a cofactor.

Its subcellular location is the secreted. It localises to the cell membrane. The protein resides in the mitochondrion outer membrane. The catalysed reaction is a 1,2-diacyl-sn-glycero-3-phosphoethanolamine + H2O = a 1-acyl-sn-glycero-3-phosphoethanolamine + a fatty acid + H(+). It carries out the reaction 1-hexadecanoyl-2-(9Z-octadecenoyl)-sn-glycero-3-phosphoethanolamine + H2O = 1-hexadecanoyl-sn-glycero-3-phosphoethanolamine + (9Z)-octadecenoate + H(+). The enzyme catalyses 1-hexadecanoyl-2-(9Z,12Z-octadecadienoyl)-sn-glycero-3-phosphoethanolamine + H2O = 1-hexadecanoyl-sn-glycero-3-phosphoethanolamine + (9Z,12Z)-octadecadienoate + H(+). It catalyses the reaction 1-hexadecanoyl-2-(5Z,8Z,11Z,14Z-eicosatetraenoyl)-sn-glycero-3-phosphoethanolamine + H2O = 1-hexadecanoyl-sn-glycero-3-phosphoethanolamine + (5Z,8Z,11Z,14Z)-eicosatetraenoate + H(+). The catalysed reaction is N-hexadecanoyl-1,2-di-(9Z-octadecenoyl)-sn-glycero-3-phosphoethanolamine + H2O = N-hexadecanoyl-1-(9Z-octadecenoyl)-sn-glycero-3-phosphoethanolamine + (9Z)-octadecenoate + H(+). It carries out the reaction 1,2-dihexadecanoyl-sn-glycero-3-phospho-(1'-sn-glycerol) + H2O = 1-hexadecanoyl-sn-glycero-3-phospho-(1'-sn-glycerol) + hexadecanoate + H(+). The enzyme catalyses 1-hexadecanoyl-2-(9Z-octadecenoyl)-sn-glycero-3-phosphoglycerol + H2O = 1-hexadecanoyl-sn-glycero-3-phosphoglycerol + (9Z)-octadecenoate + H(+). It catalyses the reaction 1-hexadecanoyl-2-(9Z-octadecenoyl)-sn-glycero-3-phospho-(1'-sn-glycerol) + H2O = 1-hexadecanoyl-sn-glycero-3-phospho-(1'-sn-glycerol) + (9Z)-octadecenoate + H(+). The catalysed reaction is a 1,2-diacyl-sn-glycero-3-phosphocholine + H2O = a 1-acyl-sn-glycero-3-phosphocholine + a fatty acid + H(+). It carries out the reaction 1,2-dihexadecanoyl-sn-glycero-3-phosphocholine + H2O = 1-hexadecanoyl-sn-glycero-3-phosphocholine + hexadecanoate + H(+). The enzyme catalyses 1-hexadecanoyl-2-(9Z-octadecenoyl)-sn-glycero-3-phosphocholine + H2O = 1-hexadecanoyl-sn-glycero-3-phosphocholine + (9Z)-octadecenoate + H(+). It catalyses the reaction 1-hexadecanoyl-2-(9Z,12Z-octadecadienoyl)-sn-glycero-3-phosphocholine + H2O = (9Z,12Z)-octadecadienoate + 1-hexadecanoyl-sn-glycero-3-phosphocholine + H(+). The catalysed reaction is 1-hexadecanoyl-2-(4Z,7Z,10Z,13Z,16Z,19Z-docosahexaenoyl)-sn-glycero-3-phosphocholine + H2O = (4Z,7Z,10Z,13Z,16Z,19Z)-docosahexaenoate + 1-hexadecanoyl-sn-glycero-3-phosphocholine + H(+). Its function is as follows. Secretory calcium-dependent phospholipase A2 that primarily targets extracellular phospholipids with implications in host antimicrobial defense, inflammatory response and tissue regeneration. Hydrolyzes the ester bond of the fatty acyl group attached at sn-2 position of phospholipids (phospholipase A2 activity) with preference for phosphatidylethanolamines and phosphatidylglycerols over phosphatidylcholines. Contributes to lipid remodeling of cellular membranes and generation of lipid mediators involved in pathogen clearance. Displays bactericidal activity against Gram-positive bacteria by directly hydrolyzing phospholipids of the bacterial membrane. Upon sterile inflammation, targets membrane phospholipids of extracellular mitochondria released from activated platelets, generating free unsaturated fatty acids such as arachidonate that is used by neighboring leukocytes to synthesize inflammatory eicosanoids such as leukotrienes. Simultaneously, by compromising mitochondrial membrane integrity, promotes the release in circulation of potent damage-associated molecular pattern molecules that activate the innate immune response. Plays a stem cell regulator role in the intestinal crypt. Within intracellular compartment mediates Paneth cell differentiation and its stem cell supporting functions by inhibiting Wnt signaling pathway in intestinal stem cell (ICS). Secreted in the intestinal lumen upon inflammation, acts in an autocrine way and promotes prostaglandin E2 synthesis that stimulates Wnt signaling pathway in ICS cells and tissue regeneration. May play a role in the biosynthesis of N-acyl ethanolamines that regulate energy metabolism and inflammation. Hydrolyzes N-acyl phosphatidylethanolamines to N-acyl lysophosphatidylethanolamines, which are further cleaved by a lysophospholipase D to release N-acyl ethanolamines. Independent of its catalytic activity, acts as a ligand for integrins. Binds to and activates integrins ITGAV:ITGB3, ITGA4:ITGB1 and ITGA5:ITGB1. Binds to a site (site 2) which is distinct from the classical ligand-binding site (site 1) and induces integrin conformational changes and enhanced ligand binding to site 1. Induces cell proliferation in an integrin-dependent manner. The sequence is that of Phospholipase A2, membrane associated (Pla2g2a) from Rattus norvegicus (Rat).